A 115-amino-acid chain; its full sequence is Macroconotoxin Mu8.1 (115 aa).

Positions 1-21 (MDMKMTFSGLVLVVLVTTVVG) are cleaved as a signal peptide. A propeptide spanning residues 22–26 (SSVRR) is cleaved from the precursor. 5 cysteine pairs are disulfide-bonded: cysteine 36–cysteine 77, cysteine 44–cysteine 60, cysteine 48–cysteine 56, cysteine 83–cysteine 115, and cysteine 87–cysteine 97. Glutamate 40 contacts Zn(2+). A Zn(2+)-binding site is contributed by histidine 68.

In terms of assembly, mostly found as a homodimer in solution; non-covalently bound. Expressed by the venom duct.

Its subcellular location is the secreted. In terms of biological role, modestly and reversibly inhibits Cav2.3/CACNA1E (IC(50)=5.8 uM) recombinantly expressed in HEK293 cells without affecting the voltage dependence of activation. In mouse DRG sensory neurons, modulates depolarization-induced calcium influx. This Conus mucronatus (Pointed cone) protein is Macroconotoxin Mu8.1.